A 168-amino-acid polypeptide reads, in one-letter code: 6,7-dimethyl-8-ribityllumazine synthase (168 aa).

5-amino-6-(D-ribitylamino)uracil is bound by residues phenylalanine 24, 58 to 60 (ALE), and 82 to 84 (AVI). Residue 87–88 (ET) coordinates (2S)-2-hydroxy-3-oxobutyl phosphate. Histidine 90 serves as the catalytic Proton donor. Position 115 (asparagine 115) interacts with 5-amino-6-(D-ribitylamino)uracil. Arginine 129 contacts (2S)-2-hydroxy-3-oxobutyl phosphate.

The protein belongs to the DMRL synthase family.

The catalysed reaction is (2S)-2-hydroxy-3-oxobutyl phosphate + 5-amino-6-(D-ribitylamino)uracil = 6,7-dimethyl-8-(1-D-ribityl)lumazine + phosphate + 2 H2O + H(+). It participates in cofactor biosynthesis; riboflavin biosynthesis; riboflavin from 2-hydroxy-3-oxobutyl phosphate and 5-amino-6-(D-ribitylamino)uracil: step 1/2. Functionally, catalyzes the formation of 6,7-dimethyl-8-ribityllumazine by condensation of 5-amino-6-(D-ribitylamino)uracil with 3,4-dihydroxy-2-butanone 4-phosphate. This is the penultimate step in the biosynthesis of riboflavin. This Paraburkholderia xenovorans (strain LB400) protein is 6,7-dimethyl-8-ribityllumazine synthase.